We begin with the raw amino-acid sequence, 319 residues long: Acetyl esterase (319 aa).

Positions 91–93 (HGG) match the Involved in the stabilization of the negatively charged intermediate by the formation of the oxyanion hole motif. Active-site residues include Ser165, Asp262, and His292.

It belongs to the 'GDXG' lipolytic enzyme family. Homodimer. Interacts with MalT and MelA.

The protein localises to the cytoplasm. Functionally, displays esterase activity towards short chain fatty esters (acyl chain length of up to 8 carbons). Able to hydrolyze triacetylglycerol (triacetin) and tributyrylglycerol (tributyrin), but not trioleylglycerol (triolein) or cholesterol oleate. Negatively regulates MalT activity by antagonizing maltotriose binding. Inhibits MelA galactosidase activity. The protein is Acetyl esterase of Escherichia coli (strain 55989 / EAEC).